A 176-amino-acid chain; its full sequence is Transcription factor E (176 aa).

The HTH TFE/IIEalpha-type domain occupies 8-90 (NDPVIQKYLH…LWTFHYENIP (83 aa)).

The protein belongs to the TFE family. In terms of assembly, monomer. Interaction with RNA polymerase subunits RpoF and RpoE is necessary for Tfe stimulatory transcription activity. Able to interact with Tbp and RNA polymerase in the absence of DNA promoter. Interacts both with the preinitiation and elongation complexes.

Functionally, transcription factor that plays a role in the activation of archaeal genes transcribed by RNA polymerase. Facilitates transcription initiation by enhancing TATA-box recognition by TATA-box-binding protein (Tbp), and transcription factor B (Tfb) and RNA polymerase recruitment. Not absolutely required for transcription in vitro, but particularly important in cases where Tbp or Tfb function is not optimal. It dynamically alters the nucleic acid-binding properties of RNA polymerases by stabilizing the initiation complex and destabilizing elongation complexes. Seems to translocate with the RNA polymerase following initiation and acts by binding to the non template strand of the transcription bubble in elongation complexes. This is Transcription factor E from Haloquadratum walsbyi (strain DSM 16790 / HBSQ001).